The primary structure comprises 178 residues: Actin-related protein 2/3 complex subunit 3 (178 aa).

A Glycyl lysine isopeptide (Lys-Gly) (interchain with G-Cter in ubiquitin) cross-link involves residue Lys29.

The protein belongs to the ARPC3 family. Component of the Arp2/3 complex composed of ARP2, ARP3, ARC40/p41-ARC, ARC35/p34-ARC, ARC18/p21-ARC, ARC19/p20-ARC and ARC16/p16-ARC.

The protein resides in the cytoplasm. Its subcellular location is the cytoskeleton. Functions as a component of the Arp2/3 complex which is involved in regulation of actin polymerization and together with an activating nucleation-promoting factor (NPF) mediates the formation of branched actin networks. This chain is Actin-related protein 2/3 complex subunit 3 (ARC18), found in Saccharomyces cerevisiae (strain ATCC 204508 / S288c) (Baker's yeast).